The primary structure comprises 1101 residues: Carbamoyl phosphate synthase large chain (1101 aa).

Residues 1–402 (MPKRTDLKSV…ALQKALRSLE (402 aa)) form a carboxyphosphate synthetic domain region. The ATP site is built by Arg129, Arg169, Gly175, Gly176, Glu208, Ile210, Glu215, Gly241, Val242, His243, Gln285, and Glu299. One can recognise an ATP-grasp 1 domain in the interval 133–328 (KGVVERAGGE…IAKIATKLAL (196 aa)). Mg(2+) contacts are provided by Gln285, Glu299, and Asn301. Residues Gln285, Glu299, and Asn301 each coordinate Mn(2+). The tract at residues 403–544 (QKGSELAFPQ…YRYSSYDLET (142 aa)) is oligomerization domain. The carbamoyl phosphate synthetic domain stretch occupies residues 545–947 (EVAPHEGESV…AFAKSQSAAG (403 aa)). Positions 675 to 866 (ALVLERAGLV…LAKAAARIGV (192 aa)) constitute an ATP-grasp 2 domain. 10 residues coordinate ATP: Arg711, Arg750, Leu752, Glu757, Gly782, Ile783, His784, Ser785, Gln825, and Glu837. Residues Gln825, Glu837, and Asn839 each contribute to the Mg(2+) site. Mn(2+) contacts are provided by Gln825, Glu837, and Asn839. Positions 948-1093 (GPLPTSGRVF…QEHDARLQQA (146 aa)) constitute an MGS-like domain. Positions 948 to 1101 (GPLPTSGRVF…QAVAGPEAAA (154 aa)) are allosteric domain.

It belongs to the CarB family. As to quaternary structure, composed of two chains; the small (or glutamine) chain promotes the hydrolysis of glutamine to ammonia, which is used by the large (or ammonia) chain to synthesize carbamoyl phosphate. Tetramer of heterodimers (alpha,beta)4. The cofactor is Mg(2+). Mn(2+) serves as cofactor.

It carries out the reaction hydrogencarbonate + L-glutamine + 2 ATP + H2O = carbamoyl phosphate + L-glutamate + 2 ADP + phosphate + 2 H(+). The enzyme catalyses hydrogencarbonate + NH4(+) + 2 ATP = carbamoyl phosphate + 2 ADP + phosphate + 2 H(+). The protein operates within amino-acid biosynthesis; L-arginine biosynthesis; carbamoyl phosphate from bicarbonate: step 1/1. It functions in the pathway pyrimidine metabolism; UMP biosynthesis via de novo pathway; (S)-dihydroorotate from bicarbonate: step 1/3. In terms of biological role, large subunit of the glutamine-dependent carbamoyl phosphate synthetase (CPSase). CPSase catalyzes the formation of carbamoyl phosphate from the ammonia moiety of glutamine, carbonate, and phosphate donated by ATP, constituting the first step of 2 biosynthetic pathways, one leading to arginine and/or urea and the other to pyrimidine nucleotides. The large subunit (synthetase) binds the substrates ammonia (free or transferred from glutamine from the small subunit), hydrogencarbonate and ATP and carries out an ATP-coupled ligase reaction, activating hydrogencarbonate by forming carboxy phosphate which reacts with ammonia to form carbamoyl phosphate. This is Carbamoyl phosphate synthase large chain from Micrococcus luteus (strain ATCC 4698 / DSM 20030 / JCM 1464 / CCM 169 / CCUG 5858 / IAM 1056 / NBRC 3333 / NCIMB 9278 / NCTC 2665 / VKM Ac-2230) (Micrococcus lysodeikticus).